The primary structure comprises 125 residues: Large ribosomal subunit protein mL51 (125 aa).

A mitochondrion-targeting transit peptide spans Met1 to Leu29.

Belongs to the mitochondrion-specific ribosomal protein mL51 family. As to quaternary structure, component of the mitochondrial ribosome large subunit (39S) which comprises a 16S rRNA and about 50 distinct proteins.

Its subcellular location is the mitochondrion. The polypeptide is Large ribosomal subunit protein mL51 (mrpl51) (Xenopus laevis (African clawed frog)).